A 390-amino-acid polypeptide reads, in one-letter code: Mevalonate kinase (390 aa).

Residues Lys-16, Ser-130, and 135 to 141 (GAGLGSS) each bind ATP. 2 residues coordinate Mg(2+): Ser-141 and Glu-193. The active-site Proton acceptor is the Asp-204.

It belongs to the GHMP kinase family. Mevalonate kinase subfamily. Mg(2+) serves as cofactor.

Its subcellular location is the cytoplasm. It carries out the reaction (R)-mevalonate + ATP = (R)-5-phosphomevalonate + ADP + H(+). It participates in isoprenoid biosynthesis; isopentenyl diphosphate biosynthesis via mevalonate pathway; isopentenyl diphosphate from (R)-mevalonate: step 1/3. Functionally, catalyzes the phosphorylation of mevalonate to mevalonate 5-phosphate, a key step in isoprenoid biosynthesis. The sequence is that of Mevalonate kinase from Dictyostelium discoideum (Social amoeba).